We begin with the raw amino-acid sequence, 387 residues long: ERBB-3 BINDING PROTEIN 1 (387 aa).

2 necessary for nucleolar localization regions span residues methionine 1–leucine 49 and leucine 297–glycine 387. The RNA-binding stretch occupies residues valine 47–alanine 55. The tract at residues leucine 337–glycine 387 is disordered. An interaction with RNA region spans residues proline 356 to glycine 373. The segment covering lysine 358–lysine 372 has biased composition (basic residues). The Nuclear localization signal signature appears at lysine 360–lysine 369.

It belongs to the peptidase M24 family. In terms of assembly, component of a ribonucleoprotein complex. In terms of tissue distribution, expressed during tuberisation and in roots, nodes, internodes, petioles, leaves, stolons, tubers and sprouts.

The protein resides in the nucleus. In terms of biological role, binds RNA. Associates with 28S, 18S and 5.8S mature rRNAs, several rRNA precursors and probably U3 small nucleolar RNA. May be involved in regulation of intermediate and late steps of rRNA processing. May be involved in ribosome assembly. Required for expression of cell cycle genes such as CYCD3-1, RNR2A and CDKB1-1. Promotes, in a dose- and auxin-dependent manner, organ growth by stimulating both cell proliferation and expansion, via the regulation of RBR1 levels. The chain is ERBB-3 BINDING PROTEIN 1 from Solanum tuberosum (Potato).